The primary structure comprises 734 residues: MTSFLTSRFGGLALRNVMNNKNGINSFGLRCFSTNSVSGLRNIGISAHIDSGKTTLTERILYYTGRIKEIHEVRGKDGVGAKMDSMDLEREKGITIQSAATYCKWGENHINIIDTPGHVDFTIEVERALRVLDGAVLVMCGVSGVQSQTITVDRQMRRYNVPRVVFINKLDRTGANPWNVIEQLRKKLNLNAIALQVPIGKESNLEGVIDLVTEKAMIFGEKGTAPIIEEIPSNFVEFVKEKKMELVETIANVDDELGEWMIENDFPNNMPDEKTLTAAIRRTTIARKVVPVMMGSAFKNTGVQPLLDGVIKYLPSPNEKKIIALDTSVKDKETEVELESDPKKPFVGLAFKLEEGRFGQLTYMRVYQGTLKRGDTIKNVNLGKTIKVPRLVKMHASEMEEVSEVGPGEICAMFGVDCYSGNTFTHQNCSYTMTSMHVPEPVMSLSIQPKSKDGQANFSKALSKFQKEDPTFRVKSDQESGQIIISGMGELHLEIYVERMKREYNVETVTGKPLVAYRETIQQRGDYNFTHRKQSGGQGQYAKMIGFAEQSENGMENEFVNDVIGTAIPPTFIEAIKKGFKDCIEKGPLIGHPVVGVKFVVSDGNTHSVDSSELAFRIATAGAFKEAFEDGEPTILEPIMKVEISLPQEFQGTVISGVNRRKGAIVNTTTQGESLTFECEVPLNNMFGYSTELRSMTQGKGEFSMEYLKHTNVSRELYNQLLEEYKKKRTEENK.

Residues Met-1 to Phe-32 constitute a mitochondrion transit peptide. In terms of domain architecture, tr-type G spans Ser-38–Asn-318. GTP contacts are provided by residues Ala-47–Thr-54, Asp-114–His-118, and Asn-168–Asp-171.

The protein belongs to the TRAFAC class translation factor GTPase superfamily. Classic translation factor GTPase family. EF-G/EF-2 subfamily.

Its subcellular location is the mitochondrion. It catalyses the reaction GTP + H2O = GDP + phosphate + H(+). Its pathway is protein biosynthesis; polypeptide chain elongation. Mitochondrial GTPase that catalyzes the GTP-dependent ribosomal translocation step during translation elongation. During this step, the ribosome changes from the pre-translocational (PRE) to the post-translocational (POST) state as the newly formed A-site-bound peptidyl-tRNA and P-site-bound deacylated tRNA move to the P and E sites, respectively. Catalyzes the coordinated movement of the two tRNA molecules, the mRNA and conformational changes in the ribosome. This is Elongation factor G, mitochondrial (gfm1) from Dictyostelium discoideum (Social amoeba).